Consider the following 258-residue polypeptide: TLC domain-containing protein 4 A (258 aa).

7 helical membrane passes run 8-28 (YLIS…YIWI), 49-71 (IEWT…SCYC), 92-112 (FILK…IIYY), 118-138 (WPII…IGLY), 144-164 (LTLL…MKWF), 170-190 (LENH…FIFI), and 217-237 (IIFF…YLVI). Residues 46 to 245 (SSKIEWTNKI…VIKGILKHLS (200 aa)) form the TLC domain.

Belongs to the TLCD4 family.

It is found in the membrane. This chain is TLC domain-containing protein 4 A (tlcd4a), found in Dictyostelium discoideum (Social amoeba).